Here is a 121-residue protein sequence, read N- to C-terminus: Large ribosomal subunit protein uL18 (121 aa).

It belongs to the universal ribosomal protein uL18 family. In terms of assembly, part of the 50S ribosomal subunit; part of the 5S rRNA/L5/L18/L25 subcomplex. Contacts the 5S and 23S rRNAs.

Functionally, this is one of the proteins that bind and probably mediate the attachment of the 5S RNA into the large ribosomal subunit, where it forms part of the central protuberance. The protein is Large ribosomal subunit protein uL18 of Streptococcus equi subsp. zooepidemicus (strain MGCS10565).